The following is a 275-amino-acid chain: 3-methyl-2-oxobutanoate hydroxymethyltransferase (275 aa).

Mg(2+)-binding residues include D49 and D88. Residues 49–50 (DS), D88, and K118 each bind 3-methyl-2-oxobutanoate. E120 lines the Mg(2+) pocket. E187 acts as the Proton acceptor in catalysis.

Belongs to the PanB family. Homodecamer; pentamer of dimers. Mg(2+) is required as a cofactor.

Its subcellular location is the cytoplasm. It catalyses the reaction 3-methyl-2-oxobutanoate + (6R)-5,10-methylene-5,6,7,8-tetrahydrofolate + H2O = 2-dehydropantoate + (6S)-5,6,7,8-tetrahydrofolate. It functions in the pathway cofactor biosynthesis; (R)-pantothenate biosynthesis; (R)-pantoate from 3-methyl-2-oxobutanoate: step 1/2. Catalyzes the reversible reaction in which hydroxymethyl group from 5,10-methylenetetrahydrofolate is transferred onto alpha-ketoisovalerate to form ketopantoate. The protein is 3-methyl-2-oxobutanoate hydroxymethyltransferase of Nitrobacter hamburgensis (strain DSM 10229 / NCIMB 13809 / X14).